A 227-amino-acid chain; its full sequence is Cytochrome c oxidase subunit 2 (227 aa).

Over 1-14 (MAYPAQMGFQDATS) the chain is Mitochondrial intermembrane. The chain crosses the membrane as a helical span at residues 15–45 (PIMEELLYFHDHTLMIVFMISSLVLYTISLM). Topologically, residues 46 to 59 (LTTSLTHTNTMNAQ) are mitochondrial matrix. The chain crosses the membrane as a helical span at residues 60-87 (EVETVWTILPAIICILIALPSLRILYMM). Residues 88 to 227 (DEINNPSLTI…YFEKWLLTML (140 aa)) are Mitochondrial intermembrane-facing. The Cu cation site is built by histidine 161, cysteine 196, glutamate 198, cysteine 200, histidine 204, and methionine 207. Glutamate 198 serves as a coordination point for Mg(2+). Position 218 is a phosphotyrosine (tyrosine 218).

This sequence belongs to the cytochrome c oxidase subunit 2 family. In terms of assembly, component of the cytochrome c oxidase (complex IV, CIV), a multisubunit enzyme composed of 14 subunits. The complex is composed of a catalytic core of 3 subunits MT-CO1, MT-CO2 and MT-CO3, encoded in the mitochondrial DNA, and 11 supernumerary subunits COX4I, COX5A, COX5B, COX6A, COX6B, COX6C, COX7A, COX7B, COX7C, COX8 and NDUFA4, which are encoded in the nuclear genome. The complex exists as a monomer or a dimer and forms supercomplexes (SCs) in the inner mitochondrial membrane with NADH-ubiquinone oxidoreductase (complex I, CI) and ubiquinol-cytochrome c oxidoreductase (cytochrome b-c1 complex, complex III, CIII), resulting in different assemblies (supercomplex SCI(1)III(2)IV(1) and megacomplex MCI(2)III(2)IV(2)). Found in a complex with TMEM177, COA6, COX18, COX20, SCO1 and SCO2. Interacts with TMEM177 in a COX20-dependent manner. Interacts with COX20. Interacts with COX16. It depends on Cu cation as a cofactor.

It localises to the mitochondrion inner membrane. It catalyses the reaction 4 Fe(II)-[cytochrome c] + O2 + 8 H(+)(in) = 4 Fe(III)-[cytochrome c] + 2 H2O + 4 H(+)(out). Component of the cytochrome c oxidase, the last enzyme in the mitochondrial electron transport chain which drives oxidative phosphorylation. The respiratory chain contains 3 multisubunit complexes succinate dehydrogenase (complex II, CII), ubiquinol-cytochrome c oxidoreductase (cytochrome b-c1 complex, complex III, CIII) and cytochrome c oxidase (complex IV, CIV), that cooperate to transfer electrons derived from NADH and succinate to molecular oxygen, creating an electrochemical gradient over the inner membrane that drives transmembrane transport and the ATP synthase. Cytochrome c oxidase is the component of the respiratory chain that catalyzes the reduction of oxygen to water. Electrons originating from reduced cytochrome c in the intermembrane space (IMS) are transferred via the dinuclear copper A center (CU(A)) of subunit 2 and heme A of subunit 1 to the active site in subunit 1, a binuclear center (BNC) formed by heme A3 and copper B (CU(B)). The BNC reduces molecular oxygen to 2 water molecules using 4 electrons from cytochrome c in the IMS and 4 protons from the mitochondrial matrix. This chain is Cytochrome c oxidase subunit 2 (MT-CO2), found in Daubentonia madagascariensis (Aye-aye).